Consider the following 194-residue polypeptide: ATP-dependent Clp protease proteolytic subunit 1 (194 aa).

S99 acts as the Nucleophile in catalysis. The active site involves H124.

It belongs to the peptidase S14 family. As to quaternary structure, fourteen ClpP subunits assemble into 2 heptameric rings which stack back to back to give a disk-like structure with a central cavity, resembling the structure of eukaryotic proteasomes.

Its subcellular location is the cytoplasm. It catalyses the reaction Hydrolysis of proteins to small peptides in the presence of ATP and magnesium. alpha-casein is the usual test substrate. In the absence of ATP, only oligopeptides shorter than five residues are hydrolyzed (such as succinyl-Leu-Tyr-|-NHMec, and Leu-Tyr-Leu-|-Tyr-Trp, in which cleavage of the -Tyr-|-Leu- and -Tyr-|-Trp bonds also occurs).. Its function is as follows. Cleaves peptides in various proteins in a process that requires ATP hydrolysis. Has a chymotrypsin-like activity. Plays a major role in the degradation of misfolded proteins. This is ATP-dependent Clp protease proteolytic subunit 1 from Borreliella burgdorferi (strain ATCC 35210 / DSM 4680 / CIP 102532 / B31) (Borrelia burgdorferi).